Consider the following 455-residue polypeptide: Phosphomethylpyrimidine synthase (455 aa).

Residues asparagine 80, methionine 109, tyrosine 139, histidine 175, serine 195–glycine 197, aspartate 236–arginine 239, and glutamate 275 each bind substrate. Histidine 279 contacts Zn(2+). Tyrosine 302 is a binding site for substrate. Histidine 343 contributes to the Zn(2+) binding site. [4Fe-4S] cluster contacts are provided by cysteine 423, cysteine 426, and cysteine 431.

Belongs to the ThiC family. [4Fe-4S] cluster serves as cofactor.

The catalysed reaction is 5-amino-1-(5-phospho-beta-D-ribosyl)imidazole + S-adenosyl-L-methionine = 4-amino-2-methyl-5-(phosphooxymethyl)pyrimidine + CO + 5'-deoxyadenosine + formate + L-methionine + 3 H(+). It participates in cofactor biosynthesis; thiamine diphosphate biosynthesis. Catalyzes the synthesis of the hydroxymethylpyrimidine phosphate (HMP-P) moiety of thiamine from aminoimidazole ribotide (AIR) in a radical S-adenosyl-L-methionine (SAM)-dependent reaction. This chain is Phosphomethylpyrimidine synthase, found in Synechococcus sp. (strain JA-2-3B'a(2-13)) (Cyanobacteria bacterium Yellowstone B-Prime).